Reading from the N-terminus, the 397-residue chain is Succinate--CoA ligase [ADP-forming] subunit beta (397 aa).

The region spanning K9–E254 is the ATP-grasp domain. ATP-binding positions include K46, G53–G55, E109, A112, and E117. 2 residues coordinate Mg(2+): N209 and D223. Residues N274 and G331–M333 each bind substrate.

This sequence belongs to the succinate/malate CoA ligase beta subunit family. In terms of assembly, heterotetramer of two alpha and two beta subunits. Mg(2+) is required as a cofactor.

The catalysed reaction is succinate + ATP + CoA = succinyl-CoA + ADP + phosphate. It carries out the reaction GTP + succinate + CoA = succinyl-CoA + GDP + phosphate. Its pathway is carbohydrate metabolism; tricarboxylic acid cycle; succinate from succinyl-CoA (ligase route): step 1/1. In terms of biological role, succinyl-CoA synthetase functions in the citric acid cycle (TCA), coupling the hydrolysis of succinyl-CoA to the synthesis of either ATP or GTP and thus represents the only step of substrate-level phosphorylation in the TCA. The beta subunit provides nucleotide specificity of the enzyme and binds the substrate succinate, while the binding sites for coenzyme A and phosphate are found in the alpha subunit. The polypeptide is Succinate--CoA ligase [ADP-forming] subunit beta (Agrobacterium fabrum (strain C58 / ATCC 33970) (Agrobacterium tumefaciens (strain C58))).